The sequence spans 85 residues: U4-theraphotoxin-Hhn1a (85 aa).

The signal sequence occupies residues 1–22 (MKVTLIAILTCAAVLVLHTTAA). A propeptide spanning residues 23-48 (EEFEAESQLMEVGMPDTELAAVDEER) is cleaved from the precursor. 3 disulfide bridges follow: cysteine 52–cysteine 66, cysteine 56–cysteine 77, and cysteine 71–cysteine 82.

Belongs to the neurotoxin 12 (Hwtx-2) family. 02 (Hwtx-2) subfamily. As to quaternary structure, monomer. Expressed by the venom gland.

Its subcellular location is the secreted. Neurotoxin active on both insects and mammals. The sequence is that of U4-theraphotoxin-Hhn1a from Cyriopagopus hainanus (Chinese bird spider).